Here is a 48-residue protein sequence, read N- to C-terminus: Small, acid-soluble spore protein N (48 aa).

The segment at 1-48 (MGINKKDGQPQYAPSHLGTKPVKYKRNKGEKFHDKSNGHPIVMQTKGE) is disordered. A compositionally biased stretch (basic and acidic residues) spans 27–37 (NKGEKFHDKSN).

The protein belongs to the SspN family.

Its subcellular location is the spore core. This is Small, acid-soluble spore protein N from Bacillus velezensis (strain DSM 23117 / BGSC 10A6 / LMG 26770 / FZB42) (Bacillus amyloliquefaciens subsp. plantarum).